The primary structure comprises 500 residues: NAD(P)H-quinone oxidoreductase chain 4, chloroplastic (500 aa).

14 helical membrane passes run 4–24 (FPWL…IFFL), 37–57 (ISIC…HFQL), 87–107 (LGSI…AWPI), 113–130 (LFYF…GLFS), 134–154 (LLLF…LLSM), 167–187 (FILY…GMGL), 211–231 (ILLY…IPLH), 242–262 (HYST…YGLI), 272–292 (AHYL…IYAA), 313–333 (MGFI…GAIL), 334–354 (QILS…TASD), 386–406 (LALP…GLIT), 417–437 (LITF…LSML), and 462–482 (LFIL…PDFV).

Belongs to the complex I subunit 4 family.

It localises to the plastid. It is found in the chloroplast thylakoid membrane. The enzyme catalyses a plastoquinone + NADH + (n+1) H(+)(in) = a plastoquinol + NAD(+) + n H(+)(out). It carries out the reaction a plastoquinone + NADPH + (n+1) H(+)(in) = a plastoquinol + NADP(+) + n H(+)(out). The chain is NAD(P)H-quinone oxidoreductase chain 4, chloroplastic (ndhD) from Triticum aestivum (Wheat).